Here is a 652-residue protein sequence, read N- to C-terminus: ATP-dependent zinc metalloprotease FtsH 1 (652 aa).

Residues 1–9 lie on the Cytoplasmic side of the membrane; that stretch reads MSDNKWLRN. The chain crosses the membrane as a helical span at residues 10–30; the sequence is GFVWMILIIAAIAVWVTFVQG. Residues 31–110 are Extracellular-facing; that stretch reads GRGGATITTQ…QTHRASQWGN (80 aa). The helical transmembrane segment at 111–131 threads the bilayer; it reads VLGTLTFLLPTLFLIGVIIFM. Topologically, residues 132-652 are cytoplasmic; the sequence is MRQAQGTNNQ…VPHIKPQPAS (521 aa). Position 203–210 (203–210) interacts with ATP; that stretch reads GPPGTGKT. Zn(2+) is bound at residue His425. The active site involves Glu426. Zn(2+) contacts are provided by His429 and Asp501. The disordered stretch occupies residues 623–652; that stretch reads IATPETARPDSPSEARPAAPVPHIKPQPAS. Pro residues predominate over residues 641-652; it reads APVPHIKPQPAS.

In the central section; belongs to the AAA ATPase family. It in the C-terminal section; belongs to the peptidase M41 family. As to quaternary structure, homohexamer. The cofactor is Zn(2+).

It localises to the cell membrane. Acts as a processive, ATP-dependent zinc metallopeptidase for both cytoplasmic and membrane proteins. Plays a role in the quality control of integral membrane proteins. This chain is ATP-dependent zinc metalloprotease FtsH 1, found in Thermomicrobium roseum (strain ATCC 27502 / DSM 5159 / P-2).